The sequence spans 144 residues: Large ribosomal subunit protein uL15 (144 aa).

Residues 1 to 54 are disordered; that stretch reads MRLNTLSPAPGRVSAKKRVGRGIGSGLGKTAGRGHKGLKSRSGGSVKPGFEGGQ. The span at 21–31 shows a compositional bias: gly residues; that stretch reads RGIGSGLGKTA.

Belongs to the universal ribosomal protein uL15 family. As to quaternary structure, part of the 50S ribosomal subunit.

Functionally, binds to the 23S rRNA. This is Large ribosomal subunit protein uL15 from Saccharophagus degradans (strain 2-40 / ATCC 43961 / DSM 17024).